We begin with the raw amino-acid sequence, 369 residues long: Caffeine synthase 1 (369 aa).

Position 24 (tyrosine 24) interacts with S-adenosyl-L-homocysteine. Threonine 31 is a binding site for caffeine. S-adenosyl-L-homocysteine contacts are provided by cysteine 66, asparagine 71, aspartate 103, leucine 104, serine 138, and phenylalanine 139. Caffeine-binding residues include tyrosine 156, histidine 159, and tryptophan 160. Residue asparagine 177 participates in Mg(2+) binding. Caffeine is bound at residue arginine 225. Aspartate 263, phenylalanine 265, and asparagine 266 together coordinate Mg(2+). Phenylalanine 321 is a caffeine binding site.

The protein belongs to the methyltransferase superfamily. Type-7 methyltransferase family. It depends on Mg(2+) as a cofactor.

It carries out the reaction theobromine + S-adenosyl-L-methionine = caffeine + S-adenosyl-L-homocysteine + H(+). It catalyses the reaction 7-methylxanthine + S-adenosyl-L-methionine = theobromine + S-adenosyl-L-homocysteine + H(+). It functions in the pathway alkaloid biosynthesis. In terms of biological role, involved in the biosynthesis of caffeine. Catalyzes the conversion of 7-methylxanthine (7mX) to theobromine and of theobromine to caffeine. This chain is Caffeine synthase 1, found in Camellia taliensis (Wild tea).